A 340-amino-acid polypeptide reads, in one-letter code: MKRDDLVSPECMDGDNVYETTLRPHSIKEYVGQKKIKKTLPIFVEAAQKRKEALDHVLLYGPPGLGKTTLALIIAREMGFNIKVTSGPVIERPGDLAAILTNLKDYDILFIDEIHRLPHSVEEILYPAMEDFYIDIVIGQGPSARSMKLDIPKFTLVGATTRAGLLTSPLRDRFGISFRLDYYAVEELTKIINRSASIMSIEIEHSGALEIAKRSRGTPRIANRLLKRVRDYAQVKGEGIIKRAVAVHALEMLEIDDRGFDQMDRSILLSIIENYGGGPVGIDTLCATVGEEKTTIEDVYEPYLIKEGYLQKTARGRIATKKAYEHFGKRKFEVGQKELF.

The interval 1-183 (MKRDDLVSPE…FGISFRLDYY (183 aa)) is large ATPase domain (RuvB-L). ATP contacts are provided by residues Leu-22, Arg-23, Gly-64, Lys-67, Thr-68, Thr-69, 130-132 (EDF), Arg-173, Tyr-183, and Arg-220. Thr-68 contacts Mg(2+). Residues 184–254 (AVEELTKIIN…VAVHALEMLE (71 aa)) are small ATPAse domain (RuvB-S). Residues 257–340 (DRGFDQMDRS…KFEVGQKELF (84 aa)) form a head domain (RuvB-H) region. The DNA site is built by Lys-312 and Arg-317.

Belongs to the RuvB family. Homohexamer. Forms an RuvA(8)-RuvB(12)-Holliday junction (HJ) complex. HJ DNA is sandwiched between 2 RuvA tetramers; dsDNA enters through RuvA and exits via RuvB. An RuvB hexamer assembles on each DNA strand where it exits the tetramer. Each RuvB hexamer is contacted by two RuvA subunits (via domain III) on 2 adjacent RuvB subunits; this complex drives branch migration. In the full resolvosome a probable DNA-RuvA(4)-RuvB(12)-RuvC(2) complex forms which resolves the HJ.

The protein localises to the cytoplasm. The enzyme catalyses ATP + H2O = ADP + phosphate + H(+). The RuvA-RuvB-RuvC complex processes Holliday junction (HJ) DNA during genetic recombination and DNA repair, while the RuvA-RuvB complex plays an important role in the rescue of blocked DNA replication forks via replication fork reversal (RFR). RuvA specifically binds to HJ cruciform DNA, conferring on it an open structure. The RuvB hexamer acts as an ATP-dependent pump, pulling dsDNA into and through the RuvAB complex. RuvB forms 2 homohexamers on either side of HJ DNA bound by 1 or 2 RuvA tetramers; 4 subunits per hexamer contact DNA at a time. Coordinated motions by a converter formed by DNA-disengaged RuvB subunits stimulates ATP hydrolysis and nucleotide exchange. Immobilization of the converter enables RuvB to convert the ATP-contained energy into a lever motion, pulling 2 nucleotides of DNA out of the RuvA tetramer per ATP hydrolyzed, thus driving DNA branch migration. The RuvB motors rotate together with the DNA substrate, which together with the progressing nucleotide cycle form the mechanistic basis for DNA recombination by continuous HJ branch migration. Branch migration allows RuvC to scan DNA until it finds its consensus sequence, where it cleaves and resolves cruciform DNA. The polypeptide is Holliday junction branch migration complex subunit RuvB (Syntrophus aciditrophicus (strain SB)).